The sequence spans 357 residues: Peptide chain release factor 1 (357 aa).

Residue glutamine 236 is modified to N5-methylglutamine.

This sequence belongs to the prokaryotic/mitochondrial release factor family. Post-translationally, methylated by PrmC. Methylation increases the termination efficiency of RF1.

It localises to the cytoplasm. Its function is as follows. Peptide chain release factor 1 directs the termination of translation in response to the peptide chain termination codons UAG and UAA. The protein is Peptide chain release factor 1 of Mycolicibacterium paratuberculosis (strain ATCC BAA-968 / K-10) (Mycobacterium paratuberculosis).